The following is a 193-amino-acid chain: Glycerol-3-phosphate acyltransferase (193 aa).

5 helical membrane passes run 2–22 (AFII…AVIV), 51–71 (QAAF…VLIA), 78–98 (GVSL…PVYF), 112–132 (VLLG…VIVV), and 154–174 (IIAG…LIIW).

This sequence belongs to the PlsY family. Probably interacts with PlsX.

Its subcellular location is the cell inner membrane. It carries out the reaction an acyl phosphate + sn-glycerol 3-phosphate = a 1-acyl-sn-glycero-3-phosphate + phosphate. It participates in lipid metabolism; phospholipid metabolism. Its function is as follows. Catalyzes the transfer of an acyl group from acyl-phosphate (acyl-PO(4)) to glycerol-3-phosphate (G3P) to form lysophosphatidic acid (LPA). This enzyme utilizes acyl-phosphate as fatty acyl donor, but not acyl-CoA or acyl-ACP. This is Glycerol-3-phosphate acyltransferase from Coxiella burnetii (strain CbuK_Q154) (Coxiella burnetii (strain Q154)).